A 304-amino-acid chain; its full sequence is Phosphoribosylaminoimidazole-succinocarboxamide synthase (304 aa).

It belongs to the SAICAR synthetase family.

It carries out the reaction 5-amino-1-(5-phospho-D-ribosyl)imidazole-4-carboxylate + L-aspartate + ATP = (2S)-2-[5-amino-1-(5-phospho-beta-D-ribosyl)imidazole-4-carboxamido]succinate + ADP + phosphate + 2 H(+). Its pathway is purine metabolism; IMP biosynthesis via de novo pathway; 5-amino-1-(5-phospho-D-ribosyl)imidazole-4-carboxamide from 5-amino-1-(5-phospho-D-ribosyl)imidazole-4-carboxylate: step 1/2. In Komagataella pastoris (Yeast), this protein is Phosphoribosylaminoimidazole-succinocarboxamide synthase (ADE1).